The primary structure comprises 360 residues: F-box protein SKP2B (360 aa).

The F-box domain occupies 25-76; that stretch reads ISEWKDIPVELLMKILNLVDDRTVIIASCICSGWRDAVSLGLTRLSLSWCKK. 9 LRR repeats span residues 77-99, 101-126, 127-152, 153-178, 180-205, 206-231, 232-257, 258-301, and 302-333; these read NMNSLVLSLAPKFVKLQTLVLRQ, KPQLEDNAVEAIANHCHELQDLDLSK, SSKITDHSLYSLARGCTNLTKLNLSG, CTSFSDTALAHLTRFCRKLKILNLCG, VEAVSDNTLQAIGENCNQLQSLNLGW, CENISDDGVMSLAYGCPDLRTLDLCS, CVLITDESVVALANRCIHLRSLGLYY, CRNI…NISQ, and CTYLTPSAVQAVCDTFPALHTCSGRHSLVMSG.

Functionally, component of SCF(SKP2B) E3 ubiquitin ligase complexes, which mediate the ubiquitination and subsequent proteasomal degradation of the cyclin-dependent kinase inhibitor KRP1. Does not interact with auxin. This is F-box protein SKP2B (SKP2B) from Arabidopsis thaliana (Mouse-ear cress).